The following is a 370-amino-acid chain: Queuine tRNA-ribosyltransferase (370 aa).

Catalysis depends on D89, which acts as the Proton acceptor. Residues 89–93 (DSGGF), D143, Q187, and G214 each bind substrate. The segment at 245-251 (GVGTPED) is RNA binding. D264 (nucleophile) is an active-site residue. The interval 269–273 (TRNAR) is RNA binding; important for wobble base 34 recognition. Zn(2+) is bound by residues C302, C304, C307, and H333.

This sequence belongs to the queuine tRNA-ribosyltransferase family. In terms of assembly, homodimer. Within each dimer, one monomer is responsible for RNA recognition and catalysis, while the other monomer binds to the replacement base PreQ1. Requires Zn(2+) as cofactor.

The catalysed reaction is 7-aminomethyl-7-carbaguanine + guanosine(34) in tRNA = 7-aminomethyl-7-carbaguanosine(34) in tRNA + guanine. The protein operates within tRNA modification; tRNA-queuosine biosynthesis. Functionally, catalyzes the base-exchange of a guanine (G) residue with the queuine precursor 7-aminomethyl-7-deazaguanine (PreQ1) at position 34 (anticodon wobble position) in tRNAs with GU(N) anticodons (tRNA-Asp, -Asn, -His and -Tyr). Catalysis occurs through a double-displacement mechanism. The nucleophile active site attacks the C1' of nucleotide 34 to detach the guanine base from the RNA, forming a covalent enzyme-RNA intermediate. The proton acceptor active site deprotonates the incoming PreQ1, allowing a nucleophilic attack on the C1' of the ribose to form the product. After dissociation, two additional enzymatic reactions on the tRNA convert PreQ1 to queuine (Q), resulting in the hypermodified nucleoside queuosine (7-(((4,5-cis-dihydroxy-2-cyclopenten-1-yl)amino)methyl)-7-deazaguanosine). The protein is Queuine tRNA-ribosyltransferase of Aromatoleum aromaticum (strain DSM 19018 / LMG 30748 / EbN1) (Azoarcus sp. (strain EbN1)).